The following is a 99-amino-acid chain: Large ribosomal subunit protein uL23 (99 aa).

Belongs to the universal ribosomal protein uL23 family. Part of the 50S ribosomal subunit. Contacts protein L29, and trigger factor when it is bound to the ribosome.

Functionally, one of the early assembly proteins it binds 23S rRNA. One of the proteins that surrounds the polypeptide exit tunnel on the outside of the ribosome. Forms the main docking site for trigger factor binding to the ribosome. The protein is Large ribosomal subunit protein uL23 of Shewanella loihica (strain ATCC BAA-1088 / PV-4).